Reading from the N-terminus, the 860-residue chain is Leucine--tRNA ligase (860 aa).

The 'HIGH' region signature appears at 42-52 (PYPSGRLHMGH). The short motif at 619–623 (KMSKS) is the 'KMSKS' region element. Residue Lys622 participates in ATP binding.

The protein belongs to the class-I aminoacyl-tRNA synthetase family.

Its subcellular location is the cytoplasm. It carries out the reaction tRNA(Leu) + L-leucine + ATP = L-leucyl-tRNA(Leu) + AMP + diphosphate. In Shigella sonnei (strain Ss046), this protein is Leucine--tRNA ligase.